A 480-amino-acid chain; its full sequence is Pyruvate kinase (480 aa).

Arg-36 is a substrate binding site. Residues Asn-38, Ser-40, and Asp-70 each coordinate K(+). Position 38 to 41 (38 to 41) interacts with ATP; it reads NFSH. Positions 77 and 160 each coordinate ATP. Glu-225 contacts Mg(2+). 3 residues coordinate substrate: Gly-251, Asp-252, and Thr-284. Asp-252 provides a ligand contact to Mg(2+).

This sequence belongs to the pyruvate kinase family. Homotetramer. Mg(2+) is required as a cofactor. It depends on K(+) as a cofactor.

The catalysed reaction is pyruvate + ATP = phosphoenolpyruvate + ADP + H(+). It participates in carbohydrate degradation; glycolysis; pyruvate from D-glyceraldehyde 3-phosphate: step 5/5. With respect to regulation, allosterically activated by AMP and by several sugar phosphates. Belongs to type II PK. This chain is Pyruvate kinase (pykA), found in Buchnera aphidicola subsp. Acyrthosiphon pisum (strain APS) (Acyrthosiphon pisum symbiotic bacterium).